The primary structure comprises 344 residues: MRNMITMGEFIVKKQADYPTATGELTSLLSSIRLAAKVVNREINKAGLADIIGSMGAENVQGEVQQKLDVYANERFKAALEARGEVCGIASEEEEDFVSFDSELSRHSKYVVLIDPLDGSSNIDVNVSVGTIFSIYRRLSAPGTGVTLEDFLQPGNRQVAAGYVVYGSSTMLVYTTGFGVNGFTYDPSIGCFCLSHENIRIPEEGKIYSINEGNYIKFPDGVKKYLKYCQERDEATHRPYTSRYIGSLVSDFHRNLLKGGIYIYPSGTNSPNGKLRLLYECNPMAFLVEQAGGKASDGFGRIMDIQPTALHQRTPYFVGSTKMVERAEAFMREFSAHEDPANQG.

The Mg(2+) site is built by glutamate 92, aspartate 115, leucine 117, and aspartate 118. Residues 118 to 121 (DGSS), asparagine 211, tyrosine 244, and lysine 274 each bind substrate. Glutamate 280 contributes to the Mg(2+) binding site.

Belongs to the FBPase class 1 family. In terms of assembly, homotetramer. It depends on Mg(2+) as a cofactor.

Its subcellular location is the cytoplasm. The catalysed reaction is beta-D-fructose 1,6-bisphosphate + H2O = beta-D-fructose 6-phosphate + phosphate. It participates in carbohydrate biosynthesis; gluconeogenesis. This Aeromonas salmonicida (strain A449) protein is Fructose-1,6-bisphosphatase class 1.